The following is a 347-amino-acid chain: Magnesium-chelatase subunit ChlI (347 aa).

41–48 is a binding site for ATP; the sequence is DRGTGKST.

It belongs to the Mg-chelatase subunits D/I family.

Its subcellular location is the plastid. The protein localises to the cyanelle. The catalysed reaction is protoporphyrin IX + Mg(2+) + ATP + H2O = Mg-protoporphyrin IX + ADP + phosphate + 3 H(+). It functions in the pathway porphyrin-containing compound metabolism; chlorophyll biosynthesis. Involved in chlorophyll biosynthesis; introduces a magnesium ion into protoporphyrin IX to yield Mg-protoporphyrin IX. This is Magnesium-chelatase subunit ChlI (chlI) from Cyanophora paradoxa.